Consider the following 273-residue polypeptide: 3-methyl-2-oxobutanoate hydroxymethyltransferase (273 aa).

Residues Asp-53 and Asp-92 each coordinate Mg(2+). 3-methyl-2-oxobutanoate contacts are provided by residues 53 to 54 (DS), Asp-92, and Lys-122. Glu-124 serves as a coordination point for Mg(2+). Catalysis depends on Glu-191, which acts as the Proton acceptor.

Belongs to the PanB family. In terms of assembly, homodecamer; pentamer of dimers. It depends on Mg(2+) as a cofactor.

The protein resides in the cytoplasm. The enzyme catalyses 3-methyl-2-oxobutanoate + (6R)-5,10-methylene-5,6,7,8-tetrahydrofolate + H2O = 2-dehydropantoate + (6S)-5,6,7,8-tetrahydrofolate. The protein operates within cofactor biosynthesis; (R)-pantothenate biosynthesis; (R)-pantoate from 3-methyl-2-oxobutanoate: step 1/2. Functionally, catalyzes the reversible reaction in which hydroxymethyl group from 5,10-methylenetetrahydrofolate is transferred onto alpha-ketoisovalerate to form ketopantoate. In Porphyromonas gingivalis (strain ATCC 33277 / DSM 20709 / CIP 103683 / JCM 12257 / NCTC 11834 / 2561), this protein is 3-methyl-2-oxobutanoate hydroxymethyltransferase.